Consider the following 150-residue polypeptide: Deoxyuridine 5'-triphosphate nucleotidohydrolase (150 aa).

Residues 69–71, asparagine 82, 86–88, and methionine 96 contribute to the substrate site; these read RSG and LID.

The protein belongs to the dUTPase family. Requires Mg(2+) as cofactor.

The enzyme catalyses dUTP + H2O = dUMP + diphosphate + H(+). It functions in the pathway pyrimidine metabolism; dUMP biosynthesis; dUMP from dCTP (dUTP route): step 2/2. Its function is as follows. This enzyme is involved in nucleotide metabolism: it produces dUMP, the immediate precursor of thymidine nucleotides and it decreases the intracellular concentration of dUTP so that uracil cannot be incorporated into DNA. This chain is Deoxyuridine 5'-triphosphate nucleotidohydrolase, found in Acinetobacter baumannii (strain AB307-0294).